We begin with the raw amino-acid sequence, 89 residues long: Large ribosomal subunit protein bL27 (89 aa).

Residues 1–24 form a disordered region; sequence MAHKKAGGSSRNGRDSDGRRLGVK.

Belongs to the bacterial ribosomal protein bL27 family.

The protein is Large ribosomal subunit protein bL27 of Azorhizobium caulinodans (strain ATCC 43989 / DSM 5975 / JCM 20966 / LMG 6465 / NBRC 14845 / NCIMB 13405 / ORS 571).